The following is a 131-amino-acid chain: Translation initiation factor 5A (131 aa).

Position 37 is a hypusine (K37).

This sequence belongs to the eIF-5A family.

The protein localises to the cytoplasm. In terms of biological role, functions by promoting the formation of the first peptide bond. The chain is Translation initiation factor 5A (eIF5A) from Methanococcus aeolicus (strain ATCC BAA-1280 / DSM 17508 / OCM 812 / Nankai-3).